The sequence spans 156 residues: Small ribosomal subunit protein uS7 (156 aa).

The protein belongs to the universal ribosomal protein uS7 family. In terms of assembly, part of the 30S ribosomal subunit. Contacts proteins S9 and S11.

One of the primary rRNA binding proteins, it binds directly to 16S rRNA where it nucleates assembly of the head domain of the 30S subunit. Is located at the subunit interface close to the decoding center, probably blocks exit of the E-site tRNA. The polypeptide is Small ribosomal subunit protein uS7 (Buchnera aphidicola subsp. Cinara cedri (strain Cc)).